Here is a 310-residue protein sequence, read N- to C-terminus: 4-diphosphocytidyl-2-C-methyl-D-erythritol kinase (310 aa).

Residue K12 is part of the active site. 97-107 (PIGAGLAGGSS) serves as a coordination point for ATP. Residue D139 is part of the active site.

Belongs to the GHMP kinase family. IspE subfamily.

The enzyme catalyses 4-CDP-2-C-methyl-D-erythritol + ATP = 4-CDP-2-C-methyl-D-erythritol 2-phosphate + ADP + H(+). Its pathway is isoprenoid biosynthesis; isopentenyl diphosphate biosynthesis via DXP pathway; isopentenyl diphosphate from 1-deoxy-D-xylulose 5-phosphate: step 3/6. Catalyzes the phosphorylation of the position 2 hydroxy group of 4-diphosphocytidyl-2C-methyl-D-erythritol. The chain is 4-diphosphocytidyl-2-C-methyl-D-erythritol kinase from Synechococcus sp. (strain CC9311).